The primary structure comprises 159 residues: Ribosomal RNA large subunit methyltransferase H (159 aa).

Residues leucine 76, glycine 108, and leucine 127 to phenylalanine 132 each bind S-adenosyl-L-methionine.

The protein belongs to the RNA methyltransferase RlmH family. As to quaternary structure, homodimer.

It is found in the cytoplasm. It carries out the reaction pseudouridine(1915) in 23S rRNA + S-adenosyl-L-methionine = N(3)-methylpseudouridine(1915) in 23S rRNA + S-adenosyl-L-homocysteine + H(+). Its function is as follows. Specifically methylates the pseudouridine at position 1915 (m3Psi1915) in 23S rRNA. This chain is Ribosomal RNA large subunit methyltransferase H, found in Syntrophomonas wolfei subsp. wolfei (strain DSM 2245B / Goettingen).